A 750-amino-acid polypeptide reads, in one-letter code: Photosystem I P700 chlorophyll a apoprotein A1 (750 aa).

The next 8 helical transmembrane spans lie at Ile70–Ala93, Leu156–His179, Leu195–Leu219, Ile291–Tyr309, Trp346–Tyr369, Leu385–Val411, Ala433–His455, and Phe531–Leu549. Positions 573 and 582 each coordinate [4Fe-4S] cluster. The next 2 membrane-spanning stretches (helical) occupy residues His589–Trp610 and Leu664–Phe686. Chlorophyll a' is bound at residue His675. Chlorophyll a is bound by residues Met683 and Tyr691. Trp692 provides a ligand contact to phylloquinone. A helical transmembrane segment spans residues Ala724–Ala744.

This sequence belongs to the PsaA/PsaB family. In terms of assembly, the PsaA/B heterodimer binds the P700 chlorophyll special pair and subsequent electron acceptors. PSI consists of a core antenna complex that captures photons, and an electron transfer chain that converts photonic excitation into a charge separation. The eukaryotic PSI reaction center is composed of at least 11 subunits. It depends on P700 is a chlorophyll a/chlorophyll a' dimer, A0 is one or more chlorophyll a, A1 is one or both phylloquinones and FX is a shared 4Fe-4S iron-sulfur center. as a cofactor.

Its subcellular location is the plastid. The protein localises to the chloroplast thylakoid membrane. It catalyses the reaction reduced [plastocyanin] + hnu + oxidized [2Fe-2S]-[ferredoxin] = oxidized [plastocyanin] + reduced [2Fe-2S]-[ferredoxin]. PsaA and PsaB bind P700, the primary electron donor of photosystem I (PSI), as well as the electron acceptors A0, A1 and FX. PSI is a plastocyanin-ferredoxin oxidoreductase, converting photonic excitation into a charge separation, which transfers an electron from the donor P700 chlorophyll pair to the spectroscopically characterized acceptors A0, A1, FX, FA and FB in turn. Oxidized P700 is reduced on the lumenal side of the thylakoid membrane by plastocyanin. The polypeptide is Photosystem I P700 chlorophyll a apoprotein A1 (Gossypium hirsutum (Upland cotton)).